The following is a 339-amino-acid chain: DNA-directed RNA polymerase subunit alpha (339 aa).

An alpha N-terminal domain (alpha-NTD) region spans residues 1 to 235 (MVIQKNWQEL…DQLQVFVNFE (235 aa)). Residues 251–339 (FNPALLKKVD…DLAKRFEEHY (89 aa)) form an alpha C-terminal domain (alpha-CTD) region.

This sequence belongs to the RNA polymerase alpha chain family. Homodimer. The RNAP catalytic core consists of 2 alpha, 1 beta, 1 beta' and 1 omega subunit. When a sigma factor is associated with the core the holoenzyme is formed, which can initiate transcription.

It catalyses the reaction RNA(n) + a ribonucleoside 5'-triphosphate = RNA(n+1) + diphosphate. DNA-dependent RNA polymerase catalyzes the transcription of DNA into RNA using the four ribonucleoside triphosphates as substrates. The sequence is that of DNA-directed RNA polymerase subunit alpha from Methylorubrum populi (strain ATCC BAA-705 / NCIMB 13946 / BJ001) (Methylobacterium populi).